A 294-amino-acid polypeptide reads, in one-letter code: Acetyl-coenzyme A carboxylase carboxyl transferase subunit beta (294 aa).

A CoA carboxyltransferase N-terminal domain is found at 25–294 (IWTKCDNCGQ…PKVDYRHCVE (270 aa)). Zn(2+) contacts are provided by C29, C32, C48, and C51. Residues 29 to 51 (CDNCGQLLYKKELERNLEVCPKC) form a C4-type zinc finger.

Belongs to the AccD/PCCB family. As to quaternary structure, acetyl-CoA carboxylase is a heterohexamer composed of biotin carboxyl carrier protein (AccB), biotin carboxylase (AccC) and two subunits each of ACCase subunit alpha (AccA) and ACCase subunit beta (AccD). It depends on Zn(2+) as a cofactor.

The protein localises to the cytoplasm. It catalyses the reaction N(6)-carboxybiotinyl-L-lysyl-[protein] + acetyl-CoA = N(6)-biotinyl-L-lysyl-[protein] + malonyl-CoA. The protein operates within lipid metabolism; malonyl-CoA biosynthesis; malonyl-CoA from acetyl-CoA: step 1/1. Its function is as follows. Component of the acetyl coenzyme A carboxylase (ACC) complex. Biotin carboxylase (BC) catalyzes the carboxylation of biotin on its carrier protein (BCCP) and then the CO(2) group is transferred by the transcarboxylase to acetyl-CoA to form malonyl-CoA. The chain is Acetyl-coenzyme A carboxylase carboxyl transferase subunit beta from Blochmanniella pennsylvanica (strain BPEN).